Consider the following 226-residue polypeptide: Leucyl/phenylalanyl-tRNA--protein transferase (226 aa).

It belongs to the L/F-transferase family.

The protein localises to the cytoplasm. The enzyme catalyses N-terminal L-lysyl-[protein] + L-leucyl-tRNA(Leu) = N-terminal L-leucyl-L-lysyl-[protein] + tRNA(Leu) + H(+). The catalysed reaction is N-terminal L-arginyl-[protein] + L-leucyl-tRNA(Leu) = N-terminal L-leucyl-L-arginyl-[protein] + tRNA(Leu) + H(+). It catalyses the reaction L-phenylalanyl-tRNA(Phe) + an N-terminal L-alpha-aminoacyl-[protein] = an N-terminal L-phenylalanyl-L-alpha-aminoacyl-[protein] + tRNA(Phe). Functionally, functions in the N-end rule pathway of protein degradation where it conjugates Leu, Phe and, less efficiently, Met from aminoacyl-tRNAs to the N-termini of proteins containing an N-terminal arginine or lysine. In Pseudomonas fluorescens (strain Pf0-1), this protein is Leucyl/phenylalanyl-tRNA--protein transferase.